Here is a 427-residue protein sequence, read N- to C-terminus: ATP-dependent RNA helicase DDX39A (427 aa).

The segment covering 1 to 19 (MAEQDVENELLDYDEDEEP) has biased composition (acidic residues). The tract at residues 1–35 (MAEQDVENELLDYDEDEEPQVPQESTPAPPKKDVK) is disordered. Residue Ala2 is modified to N-acetylalanine. Lys31 is covalently cross-linked (Glycyl lysine isopeptide (Lys-Gly) (interchain with G-Cter in SUMO2)). Position 35 is an N6-acetyllysine; alternate (Lys35). Lys35 is covalently cross-linked (Glycyl lysine isopeptide (Lys-Gly) (interchain with G-Cter in SUMO2); alternate). Position 37 is a phosphoserine (Ser37). Positions 44-72 (SGFRDFLLKPELLRAIVDCGFEHPSEVQH) match the Q motif motif. The Helicase ATP-binding domain occupies 75–248 (IPQAILGMDV…RKFMQDPMEV (174 aa)). An ATP-binding site is contributed by 88–95 (AKSGMGKT). Glycyl lysine isopeptide (Lys-Gly) (interchain with G-Cter in SUMO2) cross-links involve residues Lys154 and Lys162. A Phosphothreonine modification is found at Thr171. A DECD box motif is present at residues 195–198 (DECD). Residues Lys240 and Lys255 each participate in a glycyl lysine isopeptide (Lys-Gly) (interchain with G-Cter in SUMO2) cross-link. The region spanning 260–421 (GLQQYYVKLK…ELPEEIDIST (162 aa)) is the Helicase C-terminal domain. The residue at position 426 (Ser426) is a Phosphoserine.

Belongs to the DEAD box helicase family. DECD subfamily. In terms of assembly, binds ALYREF/THOC4 and DDX39B/BAT1. Interacts with the apo-AREX complex component SARNP. Interacts with MX1. Interacts with MCM3AP isoform GANP. Interacts with ECD. Interacts with PHAX; this interaction stimulates PHAX RNA binding activity. In terms of processing, SUMOylated by RANBP2; SUMOylation modification affects its ability to bind RNA.

It is found in the nucleus. The protein resides in the cytoplasm. The catalysed reaction is ATP + H2O = ADP + phosphate + H(+). Its function is as follows. Helicase that plays an essential role in mRNA export and is involved in multiple steps in RNA metabolism including alternative splicing. Regulates nuclear mRNA export to the cytoplasm through association with ECD. Also involved in spliceosomal uridine-rich small nuclear RNA (U snRNA) export by stimulating the RNA binding of adapter PHAX. Plays a role in the negative regulation of type I IFN production by increasing the nuclear retention of antiviral transcripts and thus reducing their protein expression. Independently of the interferon pathway, plays an antiviral role against alphaviruses by binding to a 5' conserved sequence element in the viral genomic RNA. The sequence is that of ATP-dependent RNA helicase DDX39A (Ddx39a) from Rattus norvegicus (Rat).